We begin with the raw amino-acid sequence, 321 residues long: MSGIENSGADAGEGRVKNAILIAGPTASGKSALALDLAERAGGVIVNSDSMQGYSVLDVLTARPEAADLARVPHFLYGHVHPGTAYSTGAWLRDVMKLIDDGMLSRRPVFVGGTGLYFRALAEGISEMPDIPPRIRDRWRYELKEQGAVKLHGLLLREDSRAAMQLKPTDSQRIVRALEVLDASGRSILEWQAERGRPLIDRQTARFLVIEPDRAALVDRIERRFDQMLDKGALEEVRQLAALGLDPDLPAMKAIGVRDLQAAMAGQLSFPEAIERAKIATRQYAKRQATWFRHQLGPEWQRLRPGDDLETTMQTLVANAT.

24–31 contacts ATP; sequence GPTASGKS. 26–31 provides a ligand contact to substrate; it reads TASGKS. Interaction with substrate tRNA regions lie at residues 49-52 and 172-176; these read DSMQ and QRIVR.

The protein belongs to the IPP transferase family. Monomer. Requires Mg(2+) as cofactor.

It carries out the reaction adenosine(37) in tRNA + dimethylallyl diphosphate = N(6)-dimethylallyladenosine(37) in tRNA + diphosphate. Functionally, catalyzes the transfer of a dimethylallyl group onto the adenine at position 37 in tRNAs that read codons beginning with uridine, leading to the formation of N6-(dimethylallyl)adenosine (i(6)A). This Mesorhizobium japonicum (strain LMG 29417 / CECT 9101 / MAFF 303099) (Mesorhizobium loti (strain MAFF 303099)) protein is tRNA dimethylallyltransferase.